A 119-amino-acid polypeptide reads, in one-letter code: C-X-C motif chemokine 17 (119 aa).

An N-terminal signal peptide occupies residues 1 to 22 (MKLLASPFLLLLPVMLMSMVFS). The interval 75-100 (CPCDHVKGREKKNRHQKHHRKSQRPS) is disordered. Disulfide bonds link Cys75–Cys103 and Cys77–Cys110. Residues 82–98 (GREKKNRHQKHHRKSQR) show a composition bias toward basic residues.

The protein belongs to the intercrine alpha (chemokine CxC) family. Post-translationally, likely to undergo an endoproteolytic process to form a four-cysteine-containing mature peptide with a canonical CXC chemokine scaffold after secretion. Detected in lung, trachea, lung, tongue thyroid, submaxillary gland, epididymis, and uterus tissues and at a lower level in ovary, prostate and in intestinal tissues.

It localises to the secreted. In terms of biological role, chemokine that acts as a chemoattractant for monocytes, macrophages and dendritic cells. Plays a role in angiogenesis and possibly in the development of tumors. Acts as an anti-inflammatory in the stomach. May play a role in the innate defense against infections. Activates the C-X-C chemokine receptor GPR35 to induce a rapid and transient rise in the level of intracellular calcium ions. This is C-X-C motif chemokine 17 (Cxcl17) from Mus musculus (Mouse).